The primary structure comprises 414 residues: NADH-dependent flavin oxidoreductase iccE (414 aa).

Residues 25-28 (TAIA) and Gln-107 contribute to the FMN site. 188-191 (HASH) contacts substrate. 347–348 (AR) is an FMN binding site.

The protein belongs to the NADH:flavin oxidoreductase/NADH oxidase family.

The catalysed reaction is 8-epi-ilicicolin H = ilicicolin H. It participates in mycotoxin biosynthesis. Functionally, NADH-dependent flavin oxidoreductase; part of the gene cluster that mediates the biosynthesis of ilicicolin H, a 4-hydroxy-2-pyridonealkaloid that has potent and broad antifungal activities by inhibiting the mitochondrial respiration chain. IccE acts as an epimerase and catalyzes the conversion of 8-epi-ilicicolin H into the final product ilicicolin H. The biosynthesis of ilicicolin H starts with formation of the tetramic acid by the hybrid PKS-NRPS synthetase iccA with the partnering trans-enoyl reductase iccB since iccA lacks a designated enoylreductase (ER) domain. The cytochrome P450 monooxygenase iccC then catalyzes the ring expansion of the tetramate to the acyclic 2-pyridone. The pericyclase iccD further converts the acyclic 2-pyridone into 8-epi-ilicicolin H. Finally, the epimerase iccE converts 8-epi-ilicicolin H into ilicicolin H via epimerization. IccA to iccE are sufficient for ilicicolin H biosynthesis and the roles of the remaining enzymes, iccF, iccG and iccH within the pathway have still to be determined. This Talaromyces variabilis (Penicillium variabile) protein is NADH-dependent flavin oxidoreductase iccE.